Consider the following 696-residue polypeptide: Macrolide export ATP-binding/permease protein MacB (696 aa).

The ABC transporter domain occupies 6-244 (IELKNIERYH…KPQNKRTFID (239 aa)). An ATP-binding site is contributed by 42–49 (GASGSGKS). Residues 254–287 (HNTEKLNRPNEKNNIDNDNKENNNGYNRNDNSFL) are disordered. Over residues 255-274 (NTEKLNRPNEKNNIDNDNKE) the composition is skewed to basic and acidic residues. Residues 275-284 (NNNGYNRNDN) show a composition bias toward low complexity. The next 4 helical transmembrane spans lie at 324-344 (FLTM…IALG), 576-596 (IAFI…LVSV), 626-646 (MVSL…GGLF), and 659-679 (LSSF…FGYF).

Belongs to the ABC transporter superfamily. Macrolide exporter (TC 3.A.1.122) family. As to quaternary structure, homodimer. Part of the tripartite efflux system MacAB-TolC, which is composed of an inner membrane transporter, MacB, a periplasmic membrane fusion protein, MacA, and an outer membrane component, TolC. The complex forms a large protein conduit and can translocate molecules across both the inner and outer membranes. Interacts with MacA.

It localises to the cell inner membrane. Its function is as follows. Part of the tripartite efflux system MacAB-TolC. MacB is a non-canonical ABC transporter that contains transmembrane domains (TMD), which form a pore in the inner membrane, and an ATP-binding domain (NBD), which is responsible for energy generation. Confers resistance against macrolides. The sequence is that of Macrolide export ATP-binding/permease protein MacB from Haemophilus ducreyi (strain 35000HP / ATCC 700724).